The chain runs to 226 residues: Ribosome maturation factor RimP (226 aa).

The interval 190–226 is disordered; the sequence is VFPDTTRPQPGGKTGQRKKAQPKKPARGGAPHDDTTD. Residues 204 to 215 are compositionally biased toward basic residues; the sequence is GQRKKAQPKKPA.

Belongs to the RimP family.

It localises to the cytoplasm. Its function is as follows. Required for maturation of 30S ribosomal subunits. This chain is Ribosome maturation factor RimP, found in Nitratidesulfovibrio vulgaris (strain DSM 19637 / Miyazaki F) (Desulfovibrio vulgaris).